A 373-amino-acid chain; its full sequence is tRNA-specific 2-thiouridylase MnmA (373 aa).

ATP-binding positions include Gly-12–Ser-19 and Met-38. Residues Asn-98–Asp-100 form an interaction with target base in tRNA region. Cys-103 (nucleophile) is an active-site residue. Cys-103 and Cys-200 form a disulfide bridge. Residue Gly-127 participates in ATP binding. The tract at residues Lys-150–Gln-152 is interaction with tRNA. Cys-200 serves as the catalytic Cysteine persulfide intermediate. An interaction with tRNA region spans residues Arg-312–Tyr-313.

This sequence belongs to the MnmA/TRMU family.

The protein localises to the cytoplasm. The enzyme catalyses S-sulfanyl-L-cysteinyl-[protein] + uridine(34) in tRNA + AH2 + ATP = 2-thiouridine(34) in tRNA + L-cysteinyl-[protein] + A + AMP + diphosphate + H(+). In terms of biological role, catalyzes the 2-thiolation of uridine at the wobble position (U34) of tRNA, leading to the formation of s(2)U34. The protein is tRNA-specific 2-thiouridylase MnmA of Streptococcus agalactiae serotype Ia (strain ATCC 27591 / A909 / CDC SS700).